The following is a 398-amino-acid chain: Acetate kinase (398 aa).

Asparagine 7 is a binding site for Mg(2+). An ATP-binding site is contributed by lysine 14. Residue arginine 91 participates in substrate binding. The active-site Proton donor/acceptor is aspartate 148. ATP-binding positions include 208–212 (HIGNG), 283–285 (DMR), and 331–335 (GVGEN). Residue glutamate 384 coordinates Mg(2+).

This sequence belongs to the acetokinase family. In terms of assembly, homodimer. The cofactor is Mg(2+). Requires Mn(2+) as cofactor.

Its subcellular location is the cytoplasm. It catalyses the reaction acetate + ATP = acetyl phosphate + ADP. The protein operates within metabolic intermediate biosynthesis; acetyl-CoA biosynthesis; acetyl-CoA from acetate: step 1/2. Its function is as follows. Catalyzes the formation of acetyl phosphate from acetate and ATP. Can also catalyze the reverse reaction. This chain is Acetate kinase, found in Phocaeicola vulgatus (strain ATCC 8482 / DSM 1447 / JCM 5826 / CCUG 4940 / NBRC 14291 / NCTC 11154) (Bacteroides vulgatus).